Reading from the N-terminus, the 244-residue chain is Methylthioribulose-1-phosphate dehydratase (244 aa).

Substrate is bound at residue Cys-89. Zn(2+)-binding residues include His-107 and His-109. Glu-130 functions as the Proton donor/acceptor in the catalytic mechanism. His-192 lines the Zn(2+) pocket.

This sequence belongs to the aldolase class II family. MtnB subfamily. The cofactor is Zn(2+).

It is found in the cytoplasm. It catalyses the reaction 5-(methylsulfanyl)-D-ribulose 1-phosphate = 5-methylsulfanyl-2,3-dioxopentyl phosphate + H2O. Its pathway is amino-acid biosynthesis; L-methionine biosynthesis via salvage pathway; L-methionine from S-methyl-5-thio-alpha-D-ribose 1-phosphate: step 2/6. Catalyzes the dehydration of methylthioribulose-1-phosphate (MTRu-1-P) into 2,3-diketo-5-methylthiopentyl-1-phosphate (DK-MTP-1-P). This Saccharomyces cerevisiae (strain AWRI1631) (Baker's yeast) protein is Methylthioribulose-1-phosphate dehydratase.